A 496-amino-acid polypeptide reads, in one-letter code: Genome polyprotein (496 aa).

The Extracellular portion of the chain corresponds to 1–447 (SRCTHLENRD…HTVLGGAFNS (447 aa)). Intrachain disulfides connect C3/C30, C60/C116, C60/C121, C74/C105, C92/C116, and C92/C121. The interval 98 to 111 (DRGWGNHCGLFGKG) is fusion peptide. N154 is a glycosylation site (N-linked (GlcNAc...) asparagine; by host). Disulfide bonds link C186/C290 and C307/C338. The helical transmembrane segment at 448-468 (IFGGVGFLPKLLMGVALAWLG) threads the bilayer. Over 469–479 (LNTRNPTMSIS) the chain is Cytoplasmic. A helical transmembrane segment spans residues 480–496 (FLLTGGLVLAMTLGVGA).

In terms of assembly, homodimer; in the endoplasmic reticulum and Golgi. In terms of processing, N-glycosylated.

The protein resides in the virion membrane. The protein localises to the host endoplasmic reticulum membrane. Functionally, binds to host cell surface receptor and mediates fusion between viral and cellular membranes. Envelope protein is synthesized in the endoplasmic reticulum in the form of heterodimer with protein prM. They play a role in virion budding in the ER, and the newly formed immature particle is covered with 60 spikes composed of heterodimer between precursor prM and envelope protein E. The virion is transported to the Golgi apparatus where the low pH causes dissociation of PrM-E heterodimers and formation of E homodimers. prM-E cleavage is ineficient, and many virions are only partially matured. These uncleaved prM would play a role in immune evasion. The chain is Genome polyprotein from Louping ill virus (strain SB 526) (Li).